A 370-amino-acid polypeptide reads, in one-letter code: GTPase Obg (370 aa).

The region spanning 1–159 (MKFIDEARIE…RMLRLELKVL (159 aa)) is the Obg domain. The tract at residues 127 to 146 (NLHFKSSTNRAPRQKTDGKP) is disordered. Positions 160-334 (ADVGLLGMPN…LCYAIYDYLA (175 aa)) constitute an OBG-type G domain. GTP-binding positions include 166 to 173 (GMPNAGKS), 191 to 195 (FTTLA), 213 to 216 (DIPG), 284 to 287 (NKLD), and 315 to 317 (SAL). Residues S173 and T193 each coordinate Mg(2+).

The protein belongs to the TRAFAC class OBG-HflX-like GTPase superfamily. OBG GTPase family. Monomer. It depends on Mg(2+) as a cofactor.

It is found in the cytoplasm. Functionally, an essential GTPase which binds GTP, GDP and possibly (p)ppGpp with moderate affinity, with high nucleotide exchange rates and a fairly low GTP hydrolysis rate. Plays a role in control of the cell cycle, stress response, ribosome biogenesis and in those bacteria that undergo differentiation, in morphogenesis control. The chain is GTPase Obg from Burkholderia lata (strain ATCC 17760 / DSM 23089 / LMG 22485 / NCIMB 9086 / R18194 / 383).